A 316-amino-acid polypeptide reads, in one-letter code: Taste receptor type 2 member 3 (316 aa).

The Extracellular portion of the chain corresponds to 1–7 (MFGFIEG). A helical transmembrane segment spans residues 8 to 28 (VFLVLTITEFILGNLVNGFIV). The Cytoplasmic portion of the chain corresponds to 29–50 (SINSSYWFKSKKISLSNFIITS). Residues 51–71 (LALFRIFLLWIIFIDSLIIVF) traverse the membrane as a helical segment. Topologically, residues 72-86 (SYQTHDSGIMMQLID) are extracellular. The chain crosses the membrane as a helical span at residues 87-107 (VFWTFTNHFSIWLISCLSVFY). At 108–128 (CLKIASFSHPSFLWLKWRASR) the chain is on the cytoplasmic side. The chain crosses the membrane as a helical span at residues 129–149 (VVVGMLWGALLLSCVSTMSLM). The Extracellular portion of the chain corresponds to 150 to 186 (NEFKIYSALTRSKDTPNMTEYIRLKRQEYNLMHVLGN). The N-linked (GlcNAc...) asparagine glycan is linked to Asn166. Residues 187 to 207 (LWKIPSLIVSLVAYLLLLLSL) traverse the membrane as a helical segment. Over 208–234 (GKHTQQMQQYSIDSRDQSAEAHKRAMR) the chain is Cytoplasmic. Residues 235-255 (IISSFLLFFLFYFLSFMILSS) form a helical membrane-spanning segment. Residues 256–266 (SRFLPETRIAR) are Extracellular-facing. Residues 267-287 (IIGVVISMSYLVGDSFILIVC) form a helical membrane-spanning segment. The Cytoplasmic segment spans residues 288 to 316 (NNKLKHTFVAMLPCECGHLKPGSKGPSAS).

The protein belongs to the G-protein coupled receptor T2R family.

The protein resides in the membrane. In terms of biological role, gustducin-coupled receptor implicated in the perception of bitter compounds in the oral cavity and the gastrointestinal tract. Signals through PLCB2 and the calcium-regulated cation channel TRPM5. The polypeptide is Taste receptor type 2 member 3 (Tas2r3) (Mus musculus (Mouse)).